Consider the following 431-residue polypeptide: MSISEMAFQVKEASIRLAAAGTELKNKALENIARLLMERKDEIIKANNEDLQRSREEKLAEPLLKRLKFDEAKIVDVIDGINSLIKLEDPVGKTLLSTELDEGLELYRVTCPIGVVGIIFESRPDALVQISTLCLKSGNGVLLKGGSEARETNKILAQIITEATEEVGIPPNWIKLLETRADVNEMLKMDKYIDLIIPRGSNEFVRYIMDNSRIPVMGHADGICHCYIDEDADIDMAIRIVVDSKTQYVAVCNATETLLVHKNIAPKVLPELKRALDSKNVELVGCSETQKIIPVAPATEEDWRTEYLDYKLSVKVVGDLEEAIEHINTYGSGHTDSIITNSKEKAAAFMSLVDSGNVFWNCSTRFSDGFRYGFGAEVGISTSKIHARGPVGLDGLLIYKYKLIGNGHIVEDYAKRTKSFKHNKMNKQFPL.

This sequence belongs to the gamma-glutamyl phosphate reductase family.

The protein localises to the cytoplasm. It carries out the reaction L-glutamate 5-semialdehyde + phosphate + NADP(+) = L-glutamyl 5-phosphate + NADPH + H(+). Its pathway is amino-acid biosynthesis; L-proline biosynthesis; L-glutamate 5-semialdehyde from L-glutamate: step 2/2. Its function is as follows. Catalyzes the NADPH-dependent reduction of L-glutamate 5-phosphate into L-glutamate 5-semialdehyde and phosphate. The product spontaneously undergoes cyclization to form 1-pyrroline-5-carboxylate. This chain is Gamma-glutamyl phosphate reductase, found in Acetivibrio thermocellus (strain ATCC 27405 / DSM 1237 / JCM 9322 / NBRC 103400 / NCIMB 10682 / NRRL B-4536 / VPI 7372) (Clostridium thermocellum).